A 377-amino-acid polypeptide reads, in one-letter code: Succinyl-diaminopimelate desuccinylase (377 aa).

Position 66 (histidine 66) interacts with Zn(2+). Residue aspartate 68 is part of the active site. Residue aspartate 99 participates in Zn(2+) binding. Catalysis depends on glutamate 133, which acts as the Proton acceptor. 3 residues coordinate Zn(2+): glutamate 134, glutamate 163, and histidine 349.

The protein belongs to the peptidase M20A family. DapE subfamily. As to quaternary structure, homodimer. Zn(2+) is required as a cofactor. Requires Co(2+) as cofactor.

The enzyme catalyses N-succinyl-(2S,6S)-2,6-diaminopimelate + H2O = (2S,6S)-2,6-diaminopimelate + succinate. It functions in the pathway amino-acid biosynthesis; L-lysine biosynthesis via DAP pathway; LL-2,6-diaminopimelate from (S)-tetrahydrodipicolinate (succinylase route): step 3/3. In terms of biological role, catalyzes the hydrolysis of N-succinyl-L,L-diaminopimelic acid (SDAP), forming succinate and LL-2,6-diaminopimelate (DAP), an intermediate involved in the bacterial biosynthesis of lysine and meso-diaminopimelic acid, an essential component of bacterial cell walls. This is Succinyl-diaminopimelate desuccinylase from Legionella pneumophila (strain Corby).